Here is a 194-residue protein sequence, read N- to C-terminus: HTH-type nicotine-responsive transcriptional repressor HdnoR (194 aa).

The region spanning 6–66 (VDRRQQLIDA…AAAAELLQQL (61 aa)) is the HTH tetR-type domain. A DNA-binding region (H-T-H motif) is located at residues 29–48 (SLRTIASEAKASLAAVHVCF).

In terms of assembly, homodimer.

Its activity is regulated as follows. 6-hydroxy-D-nicotine and 6-hydroxy-L-nicotine prevent HdnoR from binding to the IR1 DNA. Both 6-hydroxy-nicotine enantiomers prevent DNA-protein complex formation at micromolar concentrations, with the D-enantiomer being twice as potent as the L-enantiomer. A thousand-fold higher L-nicotine concentration is required to elicit a similar effect. Its function is as follows. Represses expression of the 6-hydroxy-D-nicotine oxidase (6-hdno). Acts by binding to a gene operator site consisting of two inverted repeats, IR1 (covering the 6-hdno promoter region) and IR2 (situated upstream from the 6-hdno promoter). Binding to one site may stimulate binding of the protein to the second site. The polypeptide is HTH-type nicotine-responsive transcriptional repressor HdnoR (Paenarthrobacter nicotinovorans (Arthrobacter nicotinovorans)).